Reading from the N-terminus, the 668-residue chain is MSQDSATTTPPPPLTSDVSMPSGEEDEPKHVTSEEEAPVTSETNLKLPLMPELEESNHTAEVVSEKVTPETMTLESEGLNHAAEDSEQTHEVTPETETAKLEVLNHTAEDSEQTHEVTPEKETVKSEFLNHVAEDSEQTHEVTPETETVKSEVLNHAAEDSEQPRGVTPTPETETSEADTSLLVTSETEEPNHAAEDYSETEPSQKLMLEQRRKYMEVEDWTEPELPDEAVLEAAASVPEPKQPEPQTPPPPPSTTTSTVASRSLAEMMNREEAEVEEKQKIQIPRSLGSFKEETNKISDLSETELNALQELRHLLQVSQDSSKTSIWGVPLLKDDRTDVVLLKFLRARDFKPQEAYSMLNKTLQWRIDFNIEELLDENLGDDLDKVVFMQGQDKENHPVCYNVYGEFQNKDLYQKTFSDEEKRERFLRWRIQFLEKSIRNLDFVAGGVSTICQVNDLKNSPGPGKTELRLATKQALHLLQDNYPEFVSKQIFINVPWWYLAFYRIISPFMSQRSKSKLVFAGPSRSAETLLKYISPEHVPVQYGGLSVDNCECNSDFTHDDIATEITVKPTTKQTVEIIVYEKCTIVWEIRVVGWEVSYGAEFVPENKEGYTVIIQKPRKMTAKNELVVSHSFKVGEVGRILLTVDNPTSTKKMLIYRFKVKPLACE.

The disordered stretch occupies residues 1-263 (MSQDSATTTP…STTTSTVASR (263 aa)). 4 stretches are compositionally biased toward basic and acidic residues: residues 55 to 68 (ESNH…EKVT), 82 to 100 (AAED…ETAK), 107 to 125 (TAED…ETVK), and 132 to 150 (VAED…ETVK). Over residues 170–186 (TPETETSEADTSLLVTS) the composition is skewed to polar residues. Residues 218–231 (VEDWTEPELPDEAV) are compositionally biased toward acidic residues. Residues 244 to 254 (PEPQTPPPPPS) show a composition bias toward pro residues. Residue serine 290 is modified to Phosphoserine. The CRAL-TRIO domain maps to 377-552 (DENLGDDLDK…QYGGLSVDNC (176 aa)). One can recognise a GOLD domain in the interval 556 to 662 (SDFTHDDIAT…KKMLIYRFKV (107 aa)).

It belongs to the patellin family.

Its subcellular location is the membrane. It localises to the cytoplasm. Carrier protein that may be involved in membrane-trafficking events associated with cell plate formation during cytokinesis. Binds to some hydrophobic molecules such as phosphoinositides and promotes their transfer between the different cellular sites. The sequence is that of Patellin-5 (PATL5) from Arabidopsis thaliana (Mouse-ear cress).